Consider the following 204-residue polypeptide: Sec-independent protein translocase protein TatB (204 aa).

Residues 1 to 21 (MFDIGFSELLLIFIVGLVVLG) form a helical membrane-spanning segment. Over residues 154-166 (VVSSVDSIQNGQS) the composition is skewed to polar residues. Residues 154–204 (VVSSVDSIQNGQSDLELDAQAEVDRQLAAMMDKYAPPDDVAENPISTEKTS) form a disordered region.

The protein belongs to the TatB family. As to quaternary structure, the Tat system comprises two distinct complexes: a TatABC complex, containing multiple copies of TatA, TatB and TatC subunits, and a separate TatA complex, containing only TatA subunits. Substrates initially bind to the TatABC complex, which probably triggers association of the separate TatA complex to form the active translocon.

It localises to the cell inner membrane. In terms of biological role, part of the twin-arginine translocation (Tat) system that transports large folded proteins containing a characteristic twin-arginine motif in their signal peptide across membranes. Together with TatC, TatB is part of a receptor directly interacting with Tat signal peptides. TatB may form an oligomeric binding site that transiently accommodates folded Tat precursor proteins before their translocation. This is Sec-independent protein translocase protein TatB from Mannheimia succiniciproducens (strain KCTC 0769BP / MBEL55E).